The chain runs to 395 residues: Innexin inx3 (395 aa).

Residues 1–37 (MAVFGMVSAVSGFIKIRYLLDKAVIDNMVFRCHYRIT) lie on the Cytoplasmic side of the membrane. A helical membrane pass occupies residues 38–58 (TAILFTCCIIVTANNLIGDPI). The Extracellular segment spans residues 59–114 (SCINDGAIPMHVINTFCWITYTYTIPGQQHRQIGTDVAGPGLGNEYGQEKRYHSYY). Residues 115–135 (QWVPFVLFFQGLMFYVPHWVW) form a helical membrane-spanning segment. At 136–183 (KNMEDGKIRMITDGLRGMVSVPDDYRRDRQDRILKYFVNSLNTHNGYS) the chain is on the cytoplasmic side. Residues 184–204 (FAYFFCELLNFINVIVNIFMV) traverse the membrane as a helical segment. Topologically, residues 205 to 272 (DKFLGGAFMS…VLALNILNEK (68 aa)) are extracellular. A helical transmembrane segment spans residues 273–293 (IYIFLWFWFIILATISGVAVL). Residues 294–395 (YSLVVIMMPT…TFGGGKETET (102 aa)) are Cytoplasmic-facing. 2 positions are modified to phosphoserine: Ser-366 and Ser-377. Tyr-381 is subject to Phosphotyrosine.

Belongs to the pannexin family. Heterooligomer of Inx2 (via cytoplasmic C-terminal region) and Inx3 (via cytoplasmic C-terminal region). In ovary, expressed in nurse cells and follicle cells. Expressed in embryonic epithelial cells. Ubiquitously expressed in stage 5 embryos. Expressed in foregut and hindgut from stage 11-17 and in proventriculus, epidermis and CNS in stage 16 embryos (at protein level). Expressed in anterior and ventral regions in stage 8 embryos. Repeating epidermal pattern emerges at stage 11, refines to one or two cells at each side of the segment borders by stage 13. Expressed in the imaginal wing disk. In pupae, expressed in the CNS and in secondary and tertiary pigment cells of the retina.

It is found in the cell membrane. The protein localises to the cell junction. Its subcellular location is the gap junction. The protein resides in the cytoplasm. It localises to the lateral cell membrane. It is found in the apicolateral cell membrane. In terms of biological role, structural components of the gap junctions. Essential for proper epithelial development of the epidermis. The sequence is that of Innexin inx3 (Inx3) from Drosophila melanogaster (Fruit fly).